The chain runs to 451 residues: tRNA-2-methylthio-N(6)-dimethylallyladenosine synthase (451 aa).

The MTTase N-terminal domain maps to 6–122 (RHYHITTFGC…LQDLLEQVFN (117 aa)). Positions 15, 51, 85, 157, 161, and 164 each coordinate [4Fe-4S] cluster. The region spanning 143 to 380 (RDSKITAWVN…NHLVGVKAAD (238 aa)) is the Radical SAM core domain. The 65-residue stretch at 383-447 (QRYMGRIEEV…PFSLTGEVKE (65 aa)) folds into the TRAM domain.

The protein belongs to the methylthiotransferase family. MiaB subfamily. Monomer. [4Fe-4S] cluster serves as cofactor.

Its subcellular location is the cytoplasm. The enzyme catalyses N(6)-dimethylallyladenosine(37) in tRNA + (sulfur carrier)-SH + AH2 + 2 S-adenosyl-L-methionine = 2-methylsulfanyl-N(6)-dimethylallyladenosine(37) in tRNA + (sulfur carrier)-H + 5'-deoxyadenosine + L-methionine + A + S-adenosyl-L-homocysteine + 2 H(+). Its function is as follows. Catalyzes the methylthiolation of N6-(dimethylallyl)adenosine (i(6)A), leading to the formation of 2-methylthio-N6-(dimethylallyl)adenosine (ms(2)i(6)A) at position 37 in tRNAs that read codons beginning with uridine. The chain is tRNA-2-methylthio-N(6)-dimethylallyladenosine synthase from Trichodesmium erythraeum (strain IMS101).